Consider the following 186-residue polypeptide: Ribosome-recycling factor (186 aa).

The protein belongs to the RRF family.

It is found in the cytoplasm. Responsible for the release of ribosomes from messenger RNA at the termination of protein biosynthesis. May increase the efficiency of translation by recycling ribosomes from one round of translation to another. This is Ribosome-recycling factor from Rickettsia felis (strain ATCC VR-1525 / URRWXCal2) (Rickettsia azadi).